A 216-amino-acid polypeptide reads, in one-letter code: Large ribosomal subunit protein bL25 (216 aa).

Disordered stretches follow at residues 1–21 (MAET…GAVR) and 192–216 (SADN…GKED). Basic and acidic residues predominate over residues 195 to 216 (NEAKTEEAGEDKSEEKSSGKED).

It belongs to the bacterial ribosomal protein bL25 family. CTC subfamily. As to quaternary structure, part of the 50S ribosomal subunit; part of the 5S rRNA/L5/L18/L25 subcomplex. Contacts the 5S rRNA. Binds to the 5S rRNA independently of L5 and L18.

In terms of biological role, this is one of the proteins that binds to the 5S RNA in the ribosome where it forms part of the central protuberance. This Parvibaculum lavamentivorans (strain DS-1 / DSM 13023 / NCIMB 13966) protein is Large ribosomal subunit protein bL25.